Here is a 392-residue protein sequence, read N- to C-terminus: MSVRESFNPESYELDKSFRLTRFAELKGTGCKVPQDVLQKLLESLQENHFQEDEQFLGAVMPRLGIGMDTCVIPLRHGGLSLVQTTDYIYPIVDDPYMMGRIACANVLSDLYAMGVTECDNMLMLLGVSNKLTDRERDKVMPLIIQGFKDAAEEAGTSVTGGQTVLNPWVVLGGVATTVCQPNEFIMPDNAVPGDVLVLTKPLGTQVAVAVHQWLDIPEKWNKIKLVVTQEDVELAYQEAMMNMARLNRTAAGLMHTFNAHAATDITGFGILGHAQNLAKQQRNEVSFVIHNLPVLAKMAAVSKACGNMFGLMHGSCPETSGGLLICLPREQAARFCAEIKSPKYGEGHQAWIIGIVEKGNRTARIIDKPRIIEVAPQIATQNVNPTPGATS.

The active site involves cysteine 31. Residues lysine 32, 67-69 (GMD), aspartate 87, aspartate 110, and 161-164 (GGQT) contribute to the ATP site. Residue aspartate 69 participates in Mg(2+) binding. Aspartate 110 is a Mg(2+) binding site. Aspartate 265 is a Mg(2+) binding site.

Belongs to the selenophosphate synthase 1 family. Class II subfamily. As to quaternary structure, homodimer. It depends on Mg(2+) as a cofactor.

It is found in the cell membrane. Its subcellular location is the nucleus membrane. It carries out the reaction hydrogenselenide + ATP + H2O = selenophosphate + AMP + phosphate + 2 H(+). In terms of biological role, synthesizes selenophosphate from selenide and ATP. The polypeptide is Selenide, water dikinase 1 (sephs1) (Xenopus laevis (African clawed frog)).